The sequence spans 465 residues: Chromosomal replication initiator protein DnaA (465 aa).

Positions 1 to 84 are domain I, interacts with DnaA modulators; sequence MSLSLWQQCL…RFEVGSKPLV (84 aa). The tract at residues 84–128 is domain II; it reads VQAISQPAQPHHKQVSAAPQQQVRSAPVRPSWDNSPAQAEHTYRS. The disordered stretch occupies residues 91-120; the sequence is AQPHHKQVSAAPQQQVRSAPVRPSWDNSPA. The interval 129 to 345 is domain III, AAA+ region; sequence NVNPKHTFDN…GALNRVIANA (217 aa). 4 residues coordinate ATP: Gly-173, Gly-175, Lys-176, and Thr-177. The domain IV, binds dsDNA stretch occupies residues 346–465; it reads NFTGRSITID…FSNLIRTLSS (120 aa).

Belongs to the DnaA family. Oligomerizes as a right-handed, spiral filament on DNA at oriC.

Its subcellular location is the cytoplasm. In terms of biological role, plays an essential role in the initiation and regulation of chromosomal replication. ATP-DnaA binds to the origin of replication (oriC) to initiate formation of the DNA replication initiation complex once per cell cycle. Binds the DnaA box (a 9 base pair repeat at the origin) and separates the double-stranded (ds)DNA. Forms a right-handed helical filament on oriC DNA; dsDNA binds to the exterior of the filament while single-stranded (ss)DNA is stabiized in the filament's interior. The ATP-DnaA-oriC complex binds and stabilizes one strand of the AT-rich DNA unwinding element (DUE), permitting loading of DNA polymerase. After initiation quickly degrades to an ADP-DnaA complex that is not apt for DNA replication. Binds acidic phospholipids. The polypeptide is Chromosomal replication initiator protein DnaA (Pectobacterium carotovorum subsp. carotovorum (strain PC1)).